Here is a 328-residue protein sequence, read N- to C-terminus: Putative glycosyltransferase 41 (328 aa).

It belongs to the glycosyltransferase group 1 family. Glycosyltransferase 4 subfamily.

This Sulfolobus islandicus filamentous virus (isolate Iceland/Hveragerdi) (SIFV) protein is Putative glycosyltransferase 41 (SIFV0041).